The sequence spans 138 residues: ATP synthase epsilon chain (138 aa).

This sequence belongs to the ATPase epsilon chain family. In terms of assembly, F-type ATPases have 2 components, CF(1) - the catalytic core - and CF(0) - the membrane proton channel. CF(1) has five subunits: alpha(3), beta(3), gamma(1), delta(1), epsilon(1). CF(0) has three main subunits: a, b and c.

It is found in the cell membrane. Produces ATP from ADP in the presence of a proton gradient across the membrane. In Streptococcus pyogenes serotype M3 (strain ATCC BAA-595 / MGAS315), this protein is ATP synthase epsilon chain.